A 318-amino-acid chain; its full sequence is NADH-ubiquinone oxidoreductase chain 1 (318 aa).

8 helical membrane passes run 2–22 (FMIN…FLTL), 70–90 (MFIL…IPLP), 100–120 (LGVL…LWSG), 147–167 (AIIL…TLII), 172–192 (TWLI…TLAE), 222–242 (LFFM…AILF), 253–273 (ELYT…FLWI), and 294–314 (LPLT…TSGI).

It belongs to the complex I subunit 1 family. Core subunit of respiratory chain NADH dehydrogenase (Complex I) which is composed of 45 different subunits.

It localises to the mitochondrion inner membrane. The enzyme catalyses a ubiquinone + NADH + 5 H(+)(in) = a ubiquinol + NAD(+) + 4 H(+)(out). Its function is as follows. Core subunit of the mitochondrial membrane respiratory chain NADH dehydrogenase (Complex I) which catalyzes electron transfer from NADH through the respiratory chain, using ubiquinone as an electron acceptor. Essential for the catalytic activity and assembly of complex I. In Bos mutus grunniens (Wild yak), this protein is NADH-ubiquinone oxidoreductase chain 1 (MT-ND1).